A 603-amino-acid polypeptide reads, in one-letter code: DNA-directed RNA polymerase subunit beta' N-terminal section (603 aa).

Zn(2+)-binding residues include C283, C285, C329, and C332.

The protein belongs to the RNA polymerase beta' chain family. RpoC1 subfamily. In terms of assembly, in plastids the minimal PEP RNA polymerase catalytic core is composed of four subunits: alpha, beta, beta', and beta''. When a (nuclear-encoded) sigma factor is associated with the core the holoenzyme is formed, which can initiate transcription. Requires Zn(2+) as cofactor.

It localises to the plastid. It is found in the chloroplast. The enzyme catalyses RNA(n) + a ribonucleoside 5'-triphosphate = RNA(n+1) + diphosphate. DNA-dependent RNA polymerase catalyzes the transcription of DNA into RNA using the four ribonucleoside triphosphates as substrates. The chain is DNA-directed RNA polymerase subunit beta' N-terminal section (rpoC1A) from Chlamydomonas reinhardtii (Chlamydomonas smithii).